Here is a 739-residue protein sequence, read N- to C-terminus: Probable beta-glucosidase L (739 aa).

An N-terminal signal peptide occupies residues 1–17 (MQTLFLSLLAAAVTVHA). N-linked (GlcNAc...) asparagine glycans are attached at residues Asn-40 and Asn-224. Asp-252 is an active-site residue. Asn-398 carries N-linked (GlcNAc...) asparagine glycosylation.

Belongs to the glycosyl hydrolase 3 family.

It is found in the secreted. It catalyses the reaction Hydrolysis of terminal, non-reducing beta-D-glucosyl residues with release of beta-D-glucose.. It functions in the pathway glycan metabolism; cellulose degradation. Functionally, beta-glucosidases are one of a number of cellulolytic enzymes involved in the degradation of cellulosic biomass. Catalyzes the last step releasing glucose from the inhibitory cellobiose. This Aspergillus fumigatus (strain ATCC MYA-4609 / CBS 101355 / FGSC A1100 / Af293) (Neosartorya fumigata) protein is Probable beta-glucosidase L (bglL).